A 474-amino-acid chain; its full sequence is Gamma-aminobutyric acid receptor subunit beta-1 (474 aa).

The first 25 residues, 1–25 (MWTVQNRESLGLLSFPVMVAMVCCA), serve as a signal peptide directing secretion. Over 26–245 (HSSNEPSNMS…SFRLKRNIGY (220 aa)) the chain is Extracellular. N-linked (GlcNAc...) asparagine glycosylation is found at N33 and N105. Y122 is a binding site for histamine. A disulfide bridge connects residues C161 and C175. N174 carries an N-linked (GlcNAc...) asparagine glycan. Histamine-binding positions include 181 to 182 (SY) and T227. 4-aminobutanoate-binding residues include Y182 and T227. 3 helical membrane-spanning segments follow: residues 246-267 (FILQ…SFWI), 271-293 (ASAA…STHL), and 305-327 (AIDI…YAFV). The Cytoplasmic segment spans residues 328–451 (NYIFFGKGPQ…DLTDVNSIDK (124 aa)). The helical transmembrane segment at 452–473 (WSRMFFPITFSLFNVVYWLYYV) threads the bilayer.

It belongs to the ligand-gated ion channel (TC 1.A.9) family. Gamma-aminobutyric acid receptor (TC 1.A.9.5) subfamily. GABRB1 sub-subfamily. In terms of assembly, heteropentamer, formed by a combination of alpha (GABRA1-6), beta (GABRB1-3), gamma (GABRG1-3), delta (GABRD), epsilon (GABRE), rho (GABRR1-3), pi (GABRP) and theta (GABRQ) chains, each subunit exhibiting distinct physiological and pharmacological properties. Binds UBQLN1.

It localises to the postsynaptic cell membrane. The protein resides in the cell membrane. The catalysed reaction is chloride(in) = chloride(out). With respect to regulation, potentiated by histamine. In terms of biological role, beta subunit of the heteropentameric ligand-gated chloride channel gated by gamma-aminobutyric acid (GABA), a major inhibitory neurotransmitter in the brain. GABA-gated chloride channels, also named GABA(A) receptors (GABAAR), consist of five subunits arranged around a central pore and contain GABA active binding site(s) located at the alpha and beta subunit interface(s). When activated by GABA, GABAARs selectively allow the flow of chloride anions across the cell membrane down their electrochemical gradient. Chloride influx into the postsynaptic neuron following GABAAR opening decreases the neuron ability to generate a new action potential, thereby reducing nerve transmission. Beta-containing GABAARs can simultaneously bind GABA and histamine where histamine binds at the interface of two neighboring beta subunits, which may be involved in the regulation of sleep and wakefulness. This is Gamma-aminobutyric acid receptor subunit beta-1 from Rattus norvegicus (Rat).